Reading from the N-terminus, the 87-residue chain is U3-theraphotoxin-Hhn1n (87 aa).

An N-terminal signal peptide occupies residues 1-24 (MVNMKASMFLTFAGLVLLFVVCYA). A propeptide spanning residues 25 to 52 (SESEEKEFPKEMLSSIFAVDNDFKQEER) is cleaved from the precursor. Cystine bridges form between Cys-54-Cys-67, Cys-61-Cys-72, and Cys-66-Cys-79.

This sequence belongs to the neurotoxin 10 (Hwtx-1) family. 51 (Hntx-8) subfamily. Hntx-8 sub-subfamily. As to expression, expressed by the venom gland.

The protein resides in the secreted. In terms of biological role, weakly inhibits Kv11.1/KCNH2/ERG1, Kv1.2/KCNA2, Kv1.3/KCNA3, and Kv2.1/KCNB1. The sequence is that of U3-theraphotoxin-Hhn1n from Cyriopagopus hainanus (Chinese bird spider).